Here is a 2715-residue protein sequence, read N- to C-terminus: Cilia- and flagella-associated protein 46 (2715 aa).

10 TPR repeats span residues 89–122, 175–208, 261–295, 324–359, 426–459, 469–503, 807–845, 936–969, 1111–1144, and 1174–1211; these read CRAQMCAPKSAENLEEFENCVTEYMKAINFAKGE, AELMLELLECYLQAGRKEEAARFCSTAAPFIKSH, GDISVILRKAYRHLGHYNHQRFPSISEEKMLLLFE, PGKLIEMECLECESEALRLESKMKVYNRAAVEAQLD, CQVHMEMAQIEEDEDRLEPATEHLRKAARLDSLG, STRLRLCTTLYQAPERAEDKAIMAVEQAKKATPKD, SRKFMRPNAFHSPLDAGATSEIKTAVEVCEFALNLTNGS, LQTLTRLTHFAHAARDHETTMACAHRALEMGIKY, AALYGLLFHSHADQDDWEGGLKVLDEAVQVLPRT, and AESEDYLARMWHRLALNSPSVSGELACYNNAIQALQKP. The disordered stretch occupies residues 1356–1412; it reads SHLLLPKKEKENERSKEKEKERSKEKENERSKEKDKEKGKEEKVKEPKQSQSPAPIK. Residues 1361–1403 show a composition bias toward basic and acidic residues; the sequence is PKKEKENERSKEKEKERSKEKENERSKEKDKEKGKEEKVKEPK. Positions 1362 to 1401 form a coiled coil; it reads KKEKENERSKEKEKERSKEKENERSKEKDKEKGKEEKVKE. The TPR 11 repeat unit spans residues 1639 to 1672; sequence AQCLLLLAQLANKEKNYGQAKKMIAQAQHLGGSE. Residues 1781-1810 adopt a coiled-coil conformation; that stretch reads VDVKLERAKIKRLRAQNEKDEEQKTAYYLE. Disordered stretches follow at residues 2000 to 2023, 2294 to 2319, and 2371 to 2399; these read EEEGATKSSRDPPASRAAPEEHCR, AVVADSGKSKGKDKERKTSTGQHSTV, and ETEGGVKKEGRSRDPKKRSLAKKGRKGSI. Composition is skewed to basic and acidic residues over residues 2300–2311 and 2371–2383; these read GKSKGKDKERKT and ETEGGVKKEGRSR. Basic residues predominate over residues 2384-2398; sequence DPKKRSLAKKGRKGS. TPR repeat units follow at residues 2399 to 2432 and 2504 to 2537; these read IPRTIPPDCIIVDSDNFKFVVDPYEEAQGPEMLT and VAVLLDLARSYQSLKRHMESVEHRRSVGRWEANW. The disordered stretch occupies residues 2541–2567; that stretch reads ASPSEDEWRRGGEPRRGFSDLEGQAAA. Basic and acidic residues predominate over residues 2546–2559; that stretch reads DEWRRGGEPRRGFS.

The protein belongs to the CFAP46 family.

It is found in the cytoplasm. The protein localises to the cytoskeleton. The protein resides in the cilium axoneme. In terms of biological role, as part of the central apparatus of the cilium axoneme plays a role in cilium movement. The chain is Cilia- and flagella-associated protein 46 from Homo sapiens (Human).